A 456-amino-acid polypeptide reads, in one-letter code: tRNA modification GTPase MnmE (456 aa).

Positions 21, 85, and 124 each coordinate (6S)-5-formyl-5,6,7,8-tetrahydrofolate. A TrmE-type G domain is found at 220 to 379 (QLRIVLYGEP…LLDEIQKKAA (160 aa)). Asn-230 serves as a coordination point for K(+). Residues 230–235 (NTGKSS), 249–255 (SEIPGTT), and 274–277 (DTAG) contribute to the GTP site. Ser-234 serves as a coordination point for Mg(2+). K(+) contacts are provided by Ser-249, Ile-251, and Thr-254. Thr-255 contributes to the Mg(2+) binding site. Lys-456 is a (6S)-5-formyl-5,6,7,8-tetrahydrofolate binding site.

It belongs to the TRAFAC class TrmE-Era-EngA-EngB-Septin-like GTPase superfamily. TrmE GTPase family. In terms of assembly, homodimer. Heterotetramer of two MnmE and two MnmG subunits. It depends on K(+) as a cofactor.

The protein localises to the cytoplasm. Exhibits a very high intrinsic GTPase hydrolysis rate. Involved in the addition of a carboxymethylaminomethyl (cmnm) group at the wobble position (U34) of certain tRNAs, forming tRNA-cmnm(5)s(2)U34. The chain is tRNA modification GTPase MnmE from Leptospira borgpetersenii serovar Hardjo-bovis (strain JB197).